The sequence spans 710 residues: Serine/threonine-protein phosphatase PP-Z2 (710 aa).

A disordered region spans residues 1-382 (MGNSGSKQHT…ADGDNGSRTN (382 aa)). The N-myristoyl glycine moiety is linked to residue Gly2. Over residues 15–27 (KKDDHDGDRKKTL) the composition is skewed to basic and acidic residues. The segment covering 40-49 (SLKSSRSLRS) has biased composition (low complexity). Residues Ser55 and Ser71 each carry the phosphoserine modification. Polar residues-rich tracts occupy residues 62 to 77 (NVQAQTQPLSRRSSTL) and 95 to 104 (PNNHYLTSHP). Low complexity-rich tracts occupy residues 105-125 (SSSRRLSSSSRRSSMGNNNNS) and 143-155 (NSTSMHSTSSFNS). Positions 160–172 (LTDDDDDRGDDGG) are enriched in acidic residues. Position 161 is a phosphothreonine (Thr161). Phosphoserine is present on residues Ser203 and Ser224. Residues 247–260 (SNRSNSHASSRKSS) are compositionally biased toward low complexity. Residues 261–273 (FGSTGNTAYSTPL) are compositionally biased toward polar residues. At Thr271 the chain carries Phosphothreonine. Phosphoserine is present on Ser275. The span at 291–302 (DNVNGRGTSPIP) shows a compositional bias: polar residues. Position 310 is a phosphoserine (Ser310). Asp454, His456, Asp482, and Asn514 together coordinate Mn(2+). His515 serves as the catalytic Proton donor. His563 and His638 together coordinate Mn(2+).

Belongs to the PPP phosphatase family. PP-Z subfamily. The cofactor is Mn(2+).

It carries out the reaction O-phospho-L-seryl-[protein] + H2O = L-seryl-[protein] + phosphate. The catalysed reaction is O-phospho-L-threonyl-[protein] + H2O = L-threonyl-[protein] + phosphate. Essential for the maintenance of cell size and integrity in response to osmotic stress. The sequence is that of Serine/threonine-protein phosphatase PP-Z2 (PPZ2) from Saccharomyces cerevisiae (strain ATCC 204508 / S288c) (Baker's yeast).